Here is a 239-residue protein sequence, read N- to C-terminus: Ribonuclease 3 (239 aa).

Residues 11 to 133 (HTAIQKKLGY…MFAAVSFDAD (123 aa)) form the RNase III domain. Residue E46 coordinates Mg(2+). D50 is a catalytic residue. Positions 119 and 122 each coordinate Mg(2+). Residue E122 is part of the active site. Positions 160–230 (DGKTALQEAL…AKEALKWLEE (71 aa)) constitute a DRBM domain.

This sequence belongs to the ribonuclease III family. In terms of assembly, homodimer. It depends on Mg(2+) as a cofactor.

It localises to the cytoplasm. The enzyme catalyses Endonucleolytic cleavage to 5'-phosphomonoester.. Functionally, digests double-stranded RNA. Involved in the processing of primary rRNA transcript to yield the immediate precursors to the large and small rRNAs (23S and 16S). Processes some mRNAs, and tRNAs when they are encoded in the rRNA operon. Processes pre-crRNA and tracrRNA of type II CRISPR loci if present in the organism. The polypeptide is Ribonuclease 3 (Neisseria gonorrhoeae (strain NCCP11945)).